A 330-amino-acid chain; its full sequence is Beta-ketoacyl-[acyl-carrier-protein] synthase III 2 (330 aa).

Residues C118 and H246 contribute to the active site. Positions 247 to 251 are ACP-binding; that stretch reads QANLR. Residue N276 is part of the active site.

It belongs to the thiolase-like superfamily. FabH family. In terms of assembly, homodimer.

It localises to the cytoplasm. It catalyses the reaction malonyl-[ACP] + acetyl-CoA + H(+) = 3-oxobutanoyl-[ACP] + CO2 + CoA. It participates in lipid metabolism; fatty acid biosynthesis. Its function is as follows. Catalyzes the condensation reaction of fatty acid synthesis by the addition to an acyl acceptor of two carbons from malonyl-ACP. Catalyzes the first condensation reaction which initiates fatty acid synthesis and may therefore play a role in governing the total rate of fatty acid production. Possesses both acetoacetyl-ACP synthase and acetyl transacylase activities. Its substrate specificity determines the biosynthesis of branched-chain and/or straight-chain of fatty acids. This Streptomyces coelicolor (strain ATCC BAA-471 / A3(2) / M145) protein is Beta-ketoacyl-[acyl-carrier-protein] synthase III 2.